We begin with the raw amino-acid sequence, 948 residues long: Bifunctional glutamine synthetase adenylyltransferase/adenylyl-removing enzyme (948 aa).

An adenylyl removase region spans residues 1–447 (MLTPDNKLMS…EFQQVVGAES (447 aa)). Positions 453–948 (EQGLQVLWQD…NCWNHLLEDD (496 aa)) are adenylyl transferase.

This sequence belongs to the GlnE family. Requires Mg(2+) as cofactor.

It catalyses the reaction [glutamine synthetase]-O(4)-(5'-adenylyl)-L-tyrosine + phosphate = [glutamine synthetase]-L-tyrosine + ADP. The catalysed reaction is [glutamine synthetase]-L-tyrosine + ATP = [glutamine synthetase]-O(4)-(5'-adenylyl)-L-tyrosine + diphosphate. Its function is as follows. Involved in the regulation of glutamine synthetase GlnA, a key enzyme in the process to assimilate ammonia. When cellular nitrogen levels are high, the C-terminal adenylyl transferase (AT) inactivates GlnA by covalent transfer of an adenylyl group from ATP to specific tyrosine residue of GlnA, thus reducing its activity. Conversely, when nitrogen levels are low, the N-terminal adenylyl removase (AR) activates GlnA by removing the adenylyl group by phosphorolysis, increasing its activity. The regulatory region of GlnE binds the signal transduction protein PII (GlnB) which indicates the nitrogen status of the cell. The chain is Bifunctional glutamine synthetase adenylyltransferase/adenylyl-removing enzyme from Idiomarina loihiensis (strain ATCC BAA-735 / DSM 15497 / L2-TR).